The chain runs to 757 residues: Two pore calcium channel protein 1 (757 aa).

At 1-94 (MRERGEMREA…NDTRFERAMR (94 aa)) the chain is on the cytoplasmic side. Residues 24-48 (HSHGSGSSGTGSHTSGGGGGWRGSR) are disordered. Residues 29-45 (GSSGTGSHTSGGGGGWR) are compositionally biased toward gly residues. The helical transmembrane segment at 95-115 (FYFVYLRLDWLWSLNLFALIL) threads the bilayer. Residues 116 to 152 (LNFLEKPLWCRGYSQHACDQRDLYFLGQLPYLSKTES) lie on the Extracellular side of the membrane. Residues 153–173 (LIYEGLTLVILVMDIFYPLSY) traverse the membrane as a helical segment. The Cytoplasmic portion of the chain corresponds to 174 to 188 (EGLNLFWKNTINKLK). A helical transmembrane segment spans residues 189–209 (VLLLFILACDILVFAFSPQPF). Arginine 210 is a topological domain (extracellular). A helical; Voltage-sensor transmembrane segment spans residues 211–228 (VAPYIRVAFLIMNIRELR). The Cytoplasmic segment spans residues 229–233 (MCAVT). A helical membrane pass occupies residues 234 to 254 (LVGMVGTYLNVLALSLLFLLF). At 255 to 270 (ASWLAYVTFEDTPQGK) the chain is on the extracellular side. Positions 271–285 (TVFSSYGTTLYQMFI) form an intramembrane region, pore-forming. Over 286 to 308 (LFTTSNNPDVWVPAYKSSRWSSL) the chain is Extracellular. The helical transmembrane segment at 309 to 329 (FFIVYVLLGVYFLTNLILAVI) threads the bilayer. The Cytoplasmic segment spans residues 330 to 453 (YDSFKEQLAK…LCEWLKSFVR (124 aa)). 2 consecutive EF-hand domains span residues 347-382 (TRKSILEKAFGIIDATGQGYLNKEQCLSLLDELNKY) and 388-423 (TSREDFELIFAELDQSGDFKVTSEEFATLCNTIAIK). The helical transmembrane segment at 454–474 (SPLFEYIVIFVLLMNLVAVII) threads the bilayer. The Extracellular portion of the chain corresponds to 475 to 493 (ETTLDIENSSSQKVWQEVE). Asparagine 482 is a glycosylation site (N-linked (GlcNAc...) asparagine). A helical transmembrane segment spans residues 494 to 514 (FVFGWIYVIEMALKIFSLGFG). At 515-523 (AYWMEGQNK) the chain is on the cytoplasmic side. The helical transmembrane segment at 524–544 (FDFVLTWTIFIGETLTFAFPS) threads the bilayer. The Extracellular portion of the chain corresponds to 545–553 (KLSFLSNGE). A helical; Voltage-sensor transmembrane segment spans residues 554–571 (WIRYLLLGRMLRLTRILL). The Cytoplasmic segment spans residues 572–595 (QVRRFRAFVATFFTLMSSLMPYLG). Residues 596 to 616 (IVFCTLCIYCSLGLQIFGGIV) form a helical membrane-spanning segment. Residues 617–640 (YAGNPTLEETDLFSNDYLLFNFND) are Extracellular-facing. Residues 641-655 (YPSGMVTLFNLLVMG) constitute an intramembrane region (pore-forming). Residues 656–676 (NWQAWMESYRQLTGSYWSLIY) are Extracellular-facing. A helical transmembrane segment spans residues 677 to 697 (FVSFYLISVLLLLNLIVAFVL). The Cytoplasmic portion of the chain corresponds to 698–757 (EAFFAEMELEKDGEADIQDPTLEGRNRRRSVRVRTKGTMVDILLHHMLSNELDGSQNRDQ).

This sequence belongs to the calcium channel alpha-1 subunit (TC 1.A.1.11) family. Two pore calcium channel subfamily. In terms of assembly, homodimer. Expressed in shoot, mature leaf, cultured cells, and at lower level in roots.

The protein localises to the membrane. With respect to regulation, inhibited by the VDCC blocker verapamil in yeast cells. Channel activity may be down-regulated by cytosolic Ca(2+) in rice cells. Inhibited by Al(3+). May function as one of the major voltage-gated Ca(2+) channel (VDCC) across the plasma membrane. May be involved in the regulation of cytosolic Ca(2+) and in growth and development. Acts as the major ROS-responsive Ca(2+) channel and is the possible target of Al-dependent inhibition. Determines sensitivity to T.viride xylanase elicitor. Plays a regulatory role in elicitor-induced defense responses and hypersensitive cell death. This Oryza sativa subsp. japonica (Rice) protein is Two pore calcium channel protein 1 (TPC1).